We begin with the raw amino-acid sequence, 305 residues long: D-alanine--D-alanine ligase (305 aa).

The ATP-grasp domain maps to 104–300 (RALFASAGIP…FPELVRWMVE (197 aa)). 131–181 (LPRPFVVKPLNEGSSVGVFIVRDNQPSPLPDWPFDADEVLVESFIPGRELT) provides a ligand contact to ATP. The Mg(2+) site is built by D249, E267, and N269.

It belongs to the D-alanine--D-alanine ligase family. Mg(2+) serves as cofactor. It depends on Mn(2+) as a cofactor.

The protein localises to the cytoplasm. It catalyses the reaction 2 D-alanine + ATP = D-alanyl-D-alanine + ADP + phosphate + H(+). Its pathway is cell wall biogenesis; peptidoglycan biosynthesis. Its function is as follows. Cell wall formation. The polypeptide is D-alanine--D-alanine ligase (Paramagnetospirillum magneticum (strain ATCC 700264 / AMB-1) (Magnetospirillum magneticum)).